The sequence spans 300 residues: Cation-efflux pump FieF (300 aa).

A helical membrane pass occupies residues 24 to 44 (LLIKIFAWWYTGSVSILAALV). Zn(2+) is bound by residues aspartate 45 and aspartate 49. Transmembrane regions (helical) follow at residues 82-102 (AALAQSMFISGSALFLFLTSI) and 114-134 (PGVGIGVTVIALICTIILVTF). 2 residues coordinate Zn(2+): histidine 153 and aspartate 157. A run of 2 helical transmembrane segments spans residues 156-176 (SDVMMNGAILIALGLSWYGWH) and 178-198 (ADALFALGIGIYILYSALRMG).

The protein belongs to the cation diffusion facilitator (CDF) transporter (TC 2.A.4) family. FieF subfamily. In terms of assembly, homodimer.

The protein localises to the cell inner membrane. The catalysed reaction is Zn(2+)(in) + H(+)(out) = Zn(2+)(out) + H(+)(in). The enzyme catalyses Cd(2+)(in) + H(+)(out) = Cd(2+)(out) + H(+)(in). It catalyses the reaction Fe(2+)(in) + H(+)(out) = Fe(2+)(out) + H(+)(in). Its function is as follows. Divalent metal cation transporter which exports Zn(2+), Cd(2+) and possibly Fe(2+). May be involved in zinc and iron detoxification by efflux. This chain is Cation-efflux pump FieF, found in Salmonella schwarzengrund (strain CVM19633).